We begin with the raw amino-acid sequence, 264 residues long: Glyceraldehyde-3-phosphate dehydrogenase (264 aa).

NAD(+) is bound by residues Arg-45 and Thr-93. D-glyceraldehyde 3-phosphate is bound by residues 123 to 125 (SCT) and Thr-154. Catalysis depends on Cys-124, which acts as the Nucleophile. Position 155 (Asn-155) interacts with NAD(+). D-glyceraldehyde 3-phosphate is bound by residues Arg-169, 182–183 (TG), and Arg-205. Residues 245–264 (GILGYTEDPXVSSDXKGNSH) are disordered.

Belongs to the glyceraldehyde-3-phosphate dehydrogenase family. Homotetramer.

It localises to the cytoplasm. The catalysed reaction is D-glyceraldehyde 3-phosphate + phosphate + NAD(+) = (2R)-3-phospho-glyceroyl phosphate + NADH + H(+). The protein operates within carbohydrate degradation; glycolysis; pyruvate from D-glyceraldehyde 3-phosphate: step 1/5. Functionally, catalyzes the oxidative phosphorylation of glyceraldehyde 3-phosphate (G3P) to 1,3-bisphosphoglycerate (BPG) using the cofactor NAD. The first reaction step involves the formation of a hemiacetal intermediate between G3P and a cysteine residue, and this hemiacetal intermediate is then oxidized to a thioester, with concomitant reduction of NAD to NADH. The reduced NADH is then exchanged with the second NAD, and the thioester is attacked by a nucleophilic inorganic phosphate to produce BPG. This Borrelia hermsii protein is Glyceraldehyde-3-phosphate dehydrogenase (gap).